The primary structure comprises 471 residues: 5-hydroxytryptamine receptor 2A (471 aa).

Residues 1-80 are Extracellular-facing; sequence MDILCEENTS…LQEKNWSALL (80 aa). An N-linked (GlcNAc...) asparagine glycan is attached at N38. A helical membrane pass occupies residues 81-97; that stretch reads TAVVIILTIAGNILVIM. The Cytoplasmic portion of the chain corresponds to 98–111; that stretch reads AVSLEKKLQNATNY. Residues 112-137 traverse the membrane as a helical segment; the sequence is FLMSLAIADMLLGFLVMPVSMLTILY. Residues 138–146 are Extracellular-facing; the sequence is GYRWPLPSK. A helical transmembrane segment spans residues 147-171; the sequence is LCAVWIYLDVLFSTASIMHLCAISL. The cysteines at positions 148 and 227 are disulfide-linked. D155 contributes to the serotonin binding site. The short motif at 172 to 174 is the DRY motif; important for ligand-induced conformation changes element; sequence DRY. The Cytoplasmic segment spans residues 172–191; the sequence is DRYVAIQNPIHHSRFNSRTK. The helical transmembrane segment at 192–215 threads the bilayer; it reads AFLKIIAVWTISVGISMPIPVFGL. At 216-232 the chain is on the extracellular side; it reads QDDSKVFKEGSCLLADD. A helical membrane pass occupies residues 233–258; the sequence is NFVLIGSFVSFFIPLTIMVITYFLTI. The Cytoplasmic portion of the chain corresponds to 259-322; it reads KSLQKEATLC…QSISNEQKAC (64 aa). S280 bears the Phosphoserine mark. Residues 323-348 traverse the membrane as a helical segment; it reads KVLGIVFSLFVVMWCPFFITNIMAVI. N343 is a binding site for serotonin. The cysteines at positions 349 and 353 are disulfide-linked. At 349–356 the chain is on the extracellular side; that stretch reads CKESCNED. Residues 357–382 form a helical membrane-spanning segment; sequence VIGALLNVFVWIGYLSSAVNPLVYTL. The NPxxY motif; important for ligand-induced conformation changes and signaling motif lies at 376–380; it reads NPLVY. At 383–471 the chain is on the cytoplasmic side; it reads FNKTYRSAFS…DGVNEKVSCV (89 aa). The tract at residues 450–471 is disordered; it reads KQHSEDASKDNSDGVNEKVSCV. Positions 451–465 are enriched in basic and acidic residues; sequence QHSEDASKDNSDGVN. The PDZ-binding signature appears at 469 to 471; sequence SCV.

It belongs to the G-protein coupled receptor 1 family. As to quaternary structure, interacts (via C-terminus) with MPDZ and PATJ. May interact (via C-terminus) with MPP3, PRDX6, DLG4, DLG1, CASK, APBA1 and MAGI2. Interacts with GRM2 and DRD2; this may affect signaling.

It localises to the cell membrane. Its subcellular location is the cell projection. The protein localises to the dendrite. It is found in the axon. The protein resides in the cytoplasmic vesicle. It localises to the membrane. Its subcellular location is the caveola. The protein localises to the presynapse. G-protein coupled receptor activity is regulated by lipids: oleamide increases HTR2A-mediated activity. G-protein coupled receptor for 5-hydroxytryptamine (serotonin). Also functions as a receptor for various drugs and psychoactive substances, including mescaline, psilocybin, 1-(2,5-dimethoxy-4-iodophenyl)-2-aminopropane (DOI) and lysergic acid diethylamide (LSD). Ligand binding causes a conformation change that triggers signaling via guanine nucleotide-binding proteins (G proteins) and modulates the activity of downstream effectors. HTR2A is coupled to G(q)/G(11) G alpha proteins and activates phospholipase C-beta, releasing diacylglycerol (DAG) and inositol 1,4,5-trisphosphate (IP3) second messengers that modulate the activity of phosphatidylinositol 3-kinase and promote the release of Ca(2+) ions from intracellular stores, respectively. Beta-arrestin family members inhibit signaling via G proteins and mediate activation of alternative signaling pathways. Affects neural activity, perception, cognition and mood. Plays a role in the regulation of behavior, including responses to anxiogenic situations and psychoactive substances. Plays a role in intestinal smooth muscle contraction, and may play a role in arterial vasoconstriction. The polypeptide is 5-hydroxytryptamine receptor 2A (HTR2A) (Pongo pygmaeus (Bornean orangutan)).